A 395-amino-acid polypeptide reads, in one-letter code: Formate-dependent phosphoribosylglycinamide formyltransferase (395 aa).

Residues 22–23 and E82 each bind N(1)-(5-phospho-beta-D-ribosyl)glycinamide; that span reads EL. ATP is bound by residues R115, K156, 161 to 166, 196 to 199, and E204; these read SSGKGQ and EGFI. In terms of domain architecture, ATP-grasp spans 120–309; sequence RLAAETLGLP…EFALHARAIL (190 aa). E268 and E280 together coordinate Mg(2+). N(1)-(5-phospho-beta-D-ribosyl)glycinamide contacts are provided by residues D287, K356, and 363–364; that span reads RR.

It belongs to the PurK/PurT family. In terms of assembly, homodimer.

The catalysed reaction is N(1)-(5-phospho-beta-D-ribosyl)glycinamide + formate + ATP = N(2)-formyl-N(1)-(5-phospho-beta-D-ribosyl)glycinamide + ADP + phosphate + H(+). Its pathway is purine metabolism; IMP biosynthesis via de novo pathway; N(2)-formyl-N(1)-(5-phospho-D-ribosyl)glycinamide from N(1)-(5-phospho-D-ribosyl)glycinamide (formate route): step 1/1. Involved in the de novo purine biosynthesis. Catalyzes the transfer of formate to 5-phospho-ribosyl-glycinamide (GAR), producing 5-phospho-ribosyl-N-formylglycinamide (FGAR). Formate is provided by PurU via hydrolysis of 10-formyl-tetrahydrofolate. The sequence is that of Formate-dependent phosphoribosylglycinamide formyltransferase from Stenotrophomonas maltophilia (strain R551-3).